The sequence spans 167 residues: uncharacterized protein (167 aa).

Residues 148 to 167 (NKESRGENDGGEERESANIY) form a disordered region.

This is an uncharacterized protein from Homo sapiens (Human).